Reading from the N-terminus, the 370-residue chain is sn-glycerol-3-phosphate import ATP-binding protein UgpC (370 aa).

An ABC transporter domain is found at 4 to 235 (LRLDGIRKRY…PATRFVASFL (232 aa)). An ATP-binding site is contributed by 37–44 (GPSGCGKS).

It belongs to the ABC transporter superfamily. sn-glycerol-3-phosphate importer (TC 3.A.1.1.3) family. As to quaternary structure, the complex is composed of two ATP-binding proteins (UgpC), two transmembrane proteins (UgpA and UgpE) and a solute-binding protein (UgpB).

It is found in the cell inner membrane. It carries out the reaction sn-glycerol 3-phosphate(out) + ATP + H2O = sn-glycerol 3-phosphate(in) + ADP + phosphate + H(+). Its function is as follows. Part of the ABC transporter complex UgpBAEC involved in sn-glycerol-3-phosphate (G3P) import. Responsible for energy coupling to the transport system. The chain is sn-glycerol-3-phosphate import ATP-binding protein UgpC from Chromohalobacter salexigens (strain ATCC BAA-138 / DSM 3043 / CIP 106854 / NCIMB 13768 / 1H11).